The sequence spans 119 residues: Small ribosomal subunit protein uS13 (119 aa).

Over residues 92–110 (RKDTCKRSTKKNARTRKGP) the composition is skewed to basic residues. A disordered region spans residues 92-119 (RKDTCKRSTKKNARTRKGPKKDNRWKER).

It belongs to the universal ribosomal protein uS13 family. As to quaternary structure, part of the 30S ribosomal subunit. Forms a loose heterodimer with protein S19. Forms two bridges to the 50S subunit in the 70S ribosome.

Located at the top of the head of the 30S subunit, it contacts several helices of the 16S rRNA. In the 70S ribosome it contacts the 23S rRNA (bridge B1a) and protein L5 of the 50S subunit (bridge B1b), connecting the 2 subunits; these bridges are implicated in subunit movement. Contacts the tRNAs in the A and P-sites. The chain is Small ribosomal subunit protein uS13 from Mycoplasma sp.